Reading from the N-terminus, the 208-residue chain is N-(5'-phosphoribosyl)anthranilate isomerase (208 aa).

Belongs to the TrpF family.

It carries out the reaction N-(5-phospho-beta-D-ribosyl)anthranilate = 1-(2-carboxyphenylamino)-1-deoxy-D-ribulose 5-phosphate. Its pathway is amino-acid biosynthesis; L-tryptophan biosynthesis; L-tryptophan from chorismate: step 3/5. The sequence is that of N-(5'-phosphoribosyl)anthranilate isomerase from Neisseria meningitidis serogroup A / serotype 4A (strain DSM 15465 / Z2491).